The primary structure comprises 227 residues: MKKAVMLVSGGADSATVLAMAREIGYEIHSMSFNYGQRNNAELRKVKELIKEYNVKQHKIVDIDLRAFGGSALTDDNIDVPHYHDVNAVPEDVPVTYVPSRNTIFLSYALGYAEVIGAKDIFIGVHTSDSANYPDCRPEYIKSFEKMANLATSIGIQGQKITIHTPLIDMTKEQIIRTGLKLGVDYKNTISCYEPTEDDSSCGNCLACMIRLDAFKKNNIQDPIKYV.

Position 8–18 (Val-8–Leu-18) interacts with ATP. Zn(2+) contacts are provided by Cys-192, Cys-202, Cys-205, and Cys-208.

This sequence belongs to the QueC family. The cofactor is Zn(2+).

The catalysed reaction is 7-carboxy-7-deazaguanine + NH4(+) + ATP = 7-cyano-7-deazaguanine + ADP + phosphate + H2O + H(+). Its pathway is purine metabolism; 7-cyano-7-deazaguanine biosynthesis. In terms of biological role, catalyzes the ATP-dependent conversion of 7-carboxy-7-deazaguanine (CDG) to 7-cyano-7-deazaguanine (preQ(0)). The chain is 7-cyano-7-deazaguanine synthase from Rickettsia akari (strain Hartford).